A 302-amino-acid chain; its full sequence is Pyridoxal kinase (302 aa).

Residues Ser-10, Thr-45, and Tyr-122 each contribute to the substrate site. ATP-binding positions include 181–182 and 215–227; these read TS and VGPK…TGTG. Substrate is bound at residue Asp-228.

Belongs to the pyridoxine kinase family. In terms of assembly, homodimer. A divalent metal cation serves as cofactor.

The protein localises to the cytoplasm. It carries out the reaction pyridoxal + ATP = pyridoxal 5'-phosphate + ADP + H(+). Its pathway is cofactor metabolism; pyridoxal 5'-phosphate salvage; pyridoxal 5'-phosphate from pyridoxal: step 1/1. Required for synthesis of pyridoxal-5-phosphate from vitamin B6. This is Pyridoxal kinase (pykA) from Dictyostelium discoideum (Social amoeba).